The primary structure comprises 331 residues: 6-phosphogluconolactonase (331 aa).

The residue at position 287 (lysine 287) is an N6-acetyllysine.

It belongs to the cycloisomerase 2 family.

The enzyme catalyses 6-phospho-D-glucono-1,5-lactone + H2O = 6-phospho-D-gluconate + H(+). It participates in carbohydrate degradation; pentose phosphate pathway; D-ribulose 5-phosphate from D-glucose 6-phosphate (oxidative stage): step 2/3. Catalyzes the hydrolysis of 6-phosphogluconolactone to 6-phosphogluconate. The protein is 6-phosphogluconolactonase of Escherichia coli (strain SMS-3-5 / SECEC).